We begin with the raw amino-acid sequence, 387 residues long: Exodeoxyribonuclease 7 large subunit (387 aa).

This sequence belongs to the XseA family. As to quaternary structure, heterooligomer composed of large and small subunits.

It is found in the cytoplasm. It carries out the reaction Exonucleolytic cleavage in either 5'- to 3'- or 3'- to 5'-direction to yield nucleoside 5'-phosphates.. Its function is as follows. Bidirectionally degrades single-stranded DNA into large acid-insoluble oligonucleotides, which are then degraded further into small acid-soluble oligonucleotides. This chain is Exodeoxyribonuclease 7 large subunit, found in Campylobacter jejuni subsp. doylei (strain ATCC BAA-1458 / RM4099 / 269.97).